Here is a 453-residue protein sequence, read N- to C-terminus: CBL-interacting protein kinase 24 (453 aa).

Residues 18–271 (YEVGRTIGQG…IEQIREDTWF (254 aa)) enclose the Protein kinase domain. ATP contacts are provided by residues 24-32 (IGQGTFAKV) and lysine 47. The active-site Proton acceptor is aspartate 141. The activation loop stretch occupies residues 159–186 (DFGLSTLAQKGVGLLHTTCGTPNYVAPE). The NAF domain occupies 310–336 (NDGGPLVMNAFEMITLSQGLDLSALFD). The tract at residues 343–372 (KRQTRFVSRKPAKTIVATIEVVAETMGLKV) is PPI.

Belongs to the protein kinase superfamily. CAMK Ser/Thr protein kinase family. SNF1 subfamily. Interacts with CBL4. Requires Mn(2+) as cofactor.

It carries out the reaction L-seryl-[protein] + ATP = O-phospho-L-seryl-[protein] + ADP + H(+). The enzyme catalyses L-threonyl-[protein] + ATP = O-phospho-L-threonyl-[protein] + ADP + H(+). Involved in the regulatory pathway for the control of intracellular Na(+) and K(+) homeostasis and salt tolerance. Operates in synergy with CBL4 to activate the plasma membrane Na(+)/H(+) antiporter SOS1. CIPK serine-threonine protein kinases interact with CBL proteins. Binding of a CBL protein to the regulatory NAF domain of CIPK protein lead to the activation of the kinase in a calcium-dependent manner. The sequence is that of CBL-interacting protein kinase 24 (CIPK24) from Oryza sativa subsp. japonica (Rice).